We begin with the raw amino-acid sequence, 463 residues long: MFS-type transporter criB (463 aa).

Transmembrane regions (helical) follow at residues 5 to 27 (LVLSCGVIAGISGFLFGYDSGIM), 46 to 66 (MVGTIVAIMQAGGFFGCLTAG), 83 to 103 (VFVVVGGALQAAAYHTAMLLI), 106 to 126 (LVTGFGVGSLTMTVPVYQAEI), 141 to 161 (LMLAIGSAIANWTGYGCSFVN), 168 to 188 (MPLALQAVPGIVLFFGSYFLP), 256 to 276 (LFLGAGIWLMLNLTGINVINY), 293 to 313 (IFLSGVYGSVGAATTFLALFF), 323 to 343 (LMMANISQTATLIVMAGLTAA), 355 to 375 (VAMIFLFFVIYCSTWGPLSWV), and 402 to 422 (FYFLFVATNFISALVLLFLYP).

It belongs to the major facilitator superfamily. Sugar transporter (TC 2.A.1.1) family.

It localises to the membrane. Functionally, MFS-type transporter; part of the gene cluster that mediates the biosynthesis of echinulin family alkaloid. The protein is MFS-type transporter criB of Aspergillus cristatus (Chinese Fuzhuan brick tea-fermentation fungus).